A 127-amino-acid polypeptide reads, in one-letter code: Large ribosomal subunit protein eL18 (127 aa).

It belongs to the eukaryotic ribosomal protein eL18 family.

In Methanopyrus kandleri (strain AV19 / DSM 6324 / JCM 9639 / NBRC 100938), this protein is Large ribosomal subunit protein eL18.